The chain runs to 180 residues: Adenine phosphoribosyltransferase (180 aa).

Belongs to the purine/pyrimidine phosphoribosyltransferase family. Homodimer.

The protein resides in the cytoplasm. The enzyme catalyses AMP + diphosphate = 5-phospho-alpha-D-ribose 1-diphosphate + adenine. Its pathway is purine metabolism; AMP biosynthesis via salvage pathway; AMP from adenine: step 1/1. Catalyzes a salvage reaction resulting in the formation of AMP, that is energically less costly than de novo synthesis. The sequence is that of Adenine phosphoribosyltransferase from Haemophilus influenzae (strain 86-028NP).